A 333-amino-acid polypeptide reads, in one-letter code: MSAALKRYDLDKLAVATVASHTALQILRGAKRYGFRTIAVAQRNADFYRQFSFIDEVWTADFSNFRHVAEKLVEKNALFIPHGSYVEYVGWRQALEAPVPTLGCRELLRWEADQYKKMELLAAAGIPTPRYYKRAEEAEGPVIVKLFGAKGGRGYFVAKNREELAKRIKAVEGDYIIQEYVFGVPAYYHYFASPVYNRVEIFGMDIRYETNVDGRTFGWVEPTFVVVGNLPLVLRESLLPVVHKYGVDFAKAVREKVSCELAGPYCLESIIRDDMTIVVFEFSGRIVAGTNVYMGVGSPYSVLYFDEPMDMGERIAHEIKEAAARGILEKLFT.

Histidine 21 and serine 84 together coordinate 5-amino-1-(5-phospho-beta-D-ribosyl)imidazole-4-carboxamide. One can recognise an ATP-grasp domain in the interval 118–313 (MELLAAAGIP…YFDEPMDMGE (196 aa)). Residues 141–187 (PVIV…VPAY) and glutamate 209 each bind ATP. Asparagine 229 provides a ligand contact to 5-amino-1-(5-phospho-beta-D-ribosyl)imidazole-4-carboxamide. Positions 268 and 281 each coordinate Mg(2+).

This sequence belongs to the phosphohexose mutase family. Mg(2+) serves as cofactor. It depends on Mn(2+) as a cofactor.

The enzyme catalyses 5-amino-1-(5-phospho-beta-D-ribosyl)imidazole-4-carboxamide + formate + ATP = 5-formamido-1-(5-phospho-D-ribosyl)imidazole-4-carboxamide + ADP + phosphate. It participates in purine metabolism; IMP biosynthesis via de novo pathway; 5-formamido-1-(5-phospho-D-ribosyl)imidazole-4-carboxamide from 5-amino-1-(5-phospho-D-ribosyl)imidazole-4-carboxamide (formate route): step 1/1. Functionally, catalyzes the ATP- and formate-dependent formylation of 5-aminoimidazole-4-carboxamide-1-beta-d-ribofuranosyl 5'-monophosphate (AICAR) to 5-formaminoimidazole-4-carboxamide-1-beta-d-ribofuranosyl 5'-monophosphate (FAICAR) in the absence of folates. This chain is 5-formaminoimidazole-4-carboxamide-1-(beta)-D-ribofuranosyl 5'-monophosphate synthetase, found in Pyrobaculum calidifontis (strain DSM 21063 / JCM 11548 / VA1).